Consider the following 86-residue polypeptide: Translation initiation factor IF-1 2 (86 aa).

In terms of domain architecture, S1-like spans 1-72; sequence MAKEELLEME…TKARISFRHK (72 aa).

It belongs to the IF-1 family. As to quaternary structure, component of the 30S ribosomal translation pre-initiation complex which assembles on the 30S ribosome in the order IF-2 and IF-3, IF-1 and N-formylmethionyl-tRNA(fMet); mRNA recruitment can occur at any time during PIC assembly.

It localises to the cytoplasm. Functionally, one of the essential components for the initiation of protein synthesis. Stabilizes the binding of IF-2 and IF-3 on the 30S subunit to which N-formylmethionyl-tRNA(fMet) subsequently binds. Helps modulate mRNA selection, yielding the 30S pre-initiation complex (PIC). Upon addition of the 50S ribosomal subunit IF-1, IF-2 and IF-3 are released leaving the mature 70S translation initiation complex. The protein is Translation initiation factor IF-1 2 of Aromatoleum aromaticum (strain DSM 19018 / LMG 30748 / EbN1) (Azoarcus sp. (strain EbN1)).